Consider the following 228-residue polypeptide: Secreted LysM effector ECP6 (228 aa).

Residues 1–18 (MQSMILFAAALMGAAVNG) form the signal peptide. Cystine bridges form between cysteine 36–cysteine 90, cysteine 64–cysteine 98, cysteine 109–cysteine 163, and cysteine 168–cysteine 220. One can recognise a LysM 1 domain in the interval 42–86 (IKYTVVKGDTLTSIAKKFKSGICNIVSVNKLANPNLIELGATLII). 4 residues coordinate chitin: threonine 51, threonine 53, asparagine 76, and isoleucine 78. N-linked (GlcNAc...) asparagine glycosylation is found at asparagine 89, asparagine 95, asparagine 127, and asparagine 133. 2 consecutive LysM domains span residues 115-160 (GSYT…IITV) and 172-216 (GTYN…QIIL). Chitin is bound by residues glycine 179, leucine 181, valine 183, proline 205, serine 206, and leucine 208. Asparagine 222 carries N-linked (GlcNAc...) asparagine glycosylation.

It belongs to the secreted LysM effector family. As to quaternary structure, forms homodimers.

Its subcellular location is the secreted. Functionally, secreted effector that enables the plant pathogenic fungus to manipulate host defenses for successful infection. Binds chitine, but not to any other glycan, including the N-linked glycan chitobiose. Outcompetes host immune receptor for chitin binding through intrachain LysM dimerization. During infection, sequesters chitin oligosaccharides that are released from the cell walls of invading hyphae to prevent elicitation of host immunity. This chain is Secreted LysM effector ECP6, found in Passalora fulva (Tomato leaf mold).